A 407-amino-acid chain; its full sequence is Protein ZNF365 (407 aa).

Ser-16 is subject to Phosphoserine. The C2H2-type; degenerate zinc finger occupies 26–51; it reads FRCPRCGDHTRFRSLSSLRAHLEFSH. The residue at position 138 (Ser-138) is a Phosphoserine. A coiled-coil region spans residues 169–296; it reads VEAVDRTIEK…KQLEYYQSQQ (128 aa). The residue at position 175 (Thr-175) is a Phosphothreonine. The disordered stretch occupies residues 347-392; sequence LKKAKDDRASMQPAKAIHEQAESSRDLCRPPKKGELLGFGRKGNIR. Over residues 362–381 the composition is skewed to basic and acidic residues; sequence AIHEQAESSRDLCRPPKKGE. Ser-369 carries the phosphoserine modification.

Homodimers. Interacts with NDE1 and NDEL1. Interacts with DISC1. Interacts with PARP1. Interacts with MCRS1.

It is found in the cytoplasm. The protein resides in the cytoskeleton. It localises to the microtubule organizing center. Its subcellular location is the centrosome. Involved in the regulation of neurogenesis. Negatively regulates neurite outgrowth. Involved in the morphogenesis of basket cells in the somatosensory cortex during embryogenesis. Involved in the positive regulation of oligodendrocyte differentiation during postnatal growth. Involved in dendritic arborization, morphogenesis of spine density dendrite, and establishment of postsynaptic dendrite density in cortical pyramidal neurons. Involved in homologous recombination (HR) repair pathway. Required for proper resolution of DNA double-strand breaks (DSBs) by HR. Is required for recovery of stalled replication forks, and directly contributes to genomic stability. Interacts with PARP1 and mediates MRE11-dependent DNA end resection during replication fork recovery. Contributes to genomic stability by preventing telomere dysfunction. The chain is Protein ZNF365 (ZNF365) from Pongo abelii (Sumatran orangutan).